We begin with the raw amino-acid sequence, 199 residues long: Recombination protein RecR (199 aa).

The C4-type zinc finger occupies cysteine 57–cysteine 72. Residues serine 81–proline 176 enclose the Toprim domain.

This sequence belongs to the RecR family.

May play a role in DNA repair. It seems to be involved in an RecBC-independent recombinational process of DNA repair. It may act with RecF and RecO. The sequence is that of Recombination protein RecR from Shewanella baltica (strain OS155 / ATCC BAA-1091).